The primary structure comprises 349 residues: Phosphate acyltransferase (349 aa).

It belongs to the PlsX family. As to quaternary structure, homodimer. Probably interacts with PlsY.

Its subcellular location is the cytoplasm. It catalyses the reaction a fatty acyl-[ACP] + phosphate = an acyl phosphate + holo-[ACP]. It functions in the pathway lipid metabolism; phospholipid metabolism. Functionally, catalyzes the reversible formation of acyl-phosphate (acyl-PO(4)) from acyl-[acyl-carrier-protein] (acyl-ACP). This enzyme utilizes acyl-ACP as fatty acyl donor, but not acyl-CoA. This is Phosphate acyltransferase from Akkermansia muciniphila (strain ATCC BAA-835 / DSM 22959 / JCM 33894 / BCRC 81048 / CCUG 64013 / CIP 107961 / Muc).